Here is a 428-residue protein sequence, read N- to C-terminus: Serine--tRNA ligase (428 aa).

235-237 (TAE) contacts L-serine. 266-268 (RSE) contributes to the ATP binding site. Glu-289 contributes to the L-serine binding site. Residue 353-356 (EISS) coordinates ATP. L-serine is bound at residue Ser-389.

The protein belongs to the class-II aminoacyl-tRNA synthetase family. Type-1 seryl-tRNA synthetase subfamily. As to quaternary structure, homodimer. The tRNA molecule binds across the dimer.

It is found in the cytoplasm. It carries out the reaction tRNA(Ser) + L-serine + ATP = L-seryl-tRNA(Ser) + AMP + diphosphate + H(+). It catalyses the reaction tRNA(Sec) + L-serine + ATP = L-seryl-tRNA(Sec) + AMP + diphosphate + H(+). It functions in the pathway aminoacyl-tRNA biosynthesis; selenocysteinyl-tRNA(Sec) biosynthesis; L-seryl-tRNA(Sec) from L-serine and tRNA(Sec): step 1/1. Functionally, catalyzes the attachment of serine to tRNA(Ser). Is also able to aminoacylate tRNA(Sec) with serine, to form the misacylated tRNA L-seryl-tRNA(Sec), which will be further converted into selenocysteinyl-tRNA(Sec). The sequence is that of Serine--tRNA ligase from Shewanella halifaxensis (strain HAW-EB4).